We begin with the raw amino-acid sequence, 282 residues long: Putative 4-diphosphocytidyl-2-C-methyl-D-erythritol kinase (282 aa).

The active site involves Lys9. 93-103 (PVSAGLAGGST) is an ATP binding site. Asp135 is an active-site residue.

Belongs to the GHMP kinase family. IspE subfamily.

The catalysed reaction is 4-CDP-2-C-methyl-D-erythritol + ATP = 4-CDP-2-C-methyl-D-erythritol 2-phosphate + ADP + H(+). Its function is as follows. Catalyzes the phosphorylation of the position 2 hydroxy group of 4-diphosphocytidyl-2C-methyl-D-erythritol. The polypeptide is Putative 4-diphosphocytidyl-2-C-methyl-D-erythritol kinase (Staphylococcus saprophyticus subsp. saprophyticus (strain ATCC 15305 / DSM 20229 / NCIMB 8711 / NCTC 7292 / S-41)).